Here is a 999-residue protein sequence, read N- to C-terminus: Embryonic polarity protein dorsal (999 aa).

Positions 1–44 (MFPNQNNGAAPGQGPAVDGQQSLNYNGLPAQQQQQLAQSTKNVR) are disordered. Residues 47–342 (PYVKITEQPA…TFWNLHRHLK (296 aa)) form the RHD domain. Ser-312 is subject to Phosphoserine; by PKA. Disordered stretches follow at residues 389 to 424 (FNHEESQQSEPALEQEQSVQQEQYTQEQSLQQEQYT) and 670 to 851 (QARK…SVSG). The segment covering 402–424 (EQEQSVQQEQYTQEQSLQQEQYT) has biased composition (low complexity). The Nuclear export signal signature appears at 668–677 (NSQARKPETP). Residues 677–686 (PMRPVPPVPP) are compositionally biased toward pro residues. A compositionally biased stretch (basic and acidic residues) spans 710–719 (KQDSNAENRS). The span at 720-734 (IEANTVQTKPSTGES) shows a compositional bias: polar residues. The Nuclear localization signal motif lies at 756 to 773 (KKPGFFSKLFSRRKSKPD). 2 stretches are compositionally biased toward low complexity: residues 819-829 (SNPAPAKSSPV) and 836-851 (SKLTKPVGRSVSSVSG).

In terms of assembly, interacts with tamo via the nuclear localization signal. Interacts with emb, a component of the nuclear export complex. In terms of tissue distribution, in unchallenged larvae, expression of both isoforms is seen in fat body and gut (isoform A is more abundant). After immune challenge levels of both isoforms are enhanced.

It is found in the cytoplasm. The protein resides in the nucleus. Its function is as follows. Embryonic developmental transcription factor. The lateral or ventral identity of a cell depends upon the concentration of this protein in its nucleus during the blastoderm stage. Acts as a morphogenetic transcription factor that specifically binds to the kappa-B-related consensus sequence 5'-GRGAAAANCC-3', located in the enhancer region of zygotic genes such as Zen, Twist, Snail and Decapentaplegic, promoting their expression. Part of a signaling pathway involving NF-kappa-B and Toll-related receptors, that functions in the apoptosis of unfit cells during cell competition. Mediates an immune response in larvae. May be part of a NF-kappa-B and Tollo signaling cascade that regulates development of the peripheral nervous system. This chain is Embryonic polarity protein dorsal (dl), found in Drosophila melanogaster (Fruit fly).